Consider the following 194-residue polypeptide: Fe/S biogenesis protein NfuA (194 aa).

2 residues coordinate [4Fe-4S] cluster: Cys152 and Cys155.

Belongs to the NfuA family. Homodimer. [4Fe-4S] cluster is required as a cofactor.

In terms of biological role, involved in iron-sulfur cluster biogenesis. Binds a 4Fe-4S cluster, can transfer this cluster to apoproteins, and thereby intervenes in the maturation of Fe/S proteins. Could also act as a scaffold/chaperone for damaged Fe/S proteins. In Pseudomonas putida (strain ATCC 700007 / DSM 6899 / JCM 31910 / BCRC 17059 / LMG 24140 / F1), this protein is Fe/S biogenesis protein NfuA.